The primary structure comprises 159 residues: SsrA-binding protein (159 aa).

Residues 131-159 form a disordered region; that stretch reads KGKKLHDKRESEKERDWNRQKSRLLKDNG. Residues 137–159 show a composition bias toward basic and acidic residues; that stretch reads DKRESEKERDWNRQKSRLLKDNG.

This sequence belongs to the SmpB family.

The protein localises to the cytoplasm. In terms of biological role, required for rescue of stalled ribosomes mediated by trans-translation. Binds to transfer-messenger RNA (tmRNA), required for stable association of tmRNA with ribosomes. tmRNA and SmpB together mimic tRNA shape, replacing the anticodon stem-loop with SmpB. tmRNA is encoded by the ssrA gene; the 2 termini fold to resemble tRNA(Ala) and it encodes a 'tag peptide', a short internal open reading frame. During trans-translation Ala-aminoacylated tmRNA acts like a tRNA, entering the A-site of stalled ribosomes, displacing the stalled mRNA. The ribosome then switches to translate the ORF on the tmRNA; the nascent peptide is terminated with the 'tag peptide' encoded by the tmRNA and targeted for degradation. The ribosome is freed to recommence translation, which seems to be the essential function of trans-translation. In Rhizobium etli (strain CIAT 652), this protein is SsrA-binding protein.